A 1002-amino-acid chain; its full sequence is Transposase for transposon gamma-delta (1002 aa).

This sequence belongs to the transposase 7 family.

Required for transposition of transposon Tn1000. The chain is Transposase for transposon gamma-delta (tnpA) from Escherichia coli (strain K12).